The following is a 110-amino-acid chain: Circadian clock oscillator protein KaiB (110 aa).

This sequence belongs to the KaiB family. In terms of assembly, the KaiABC complex composition changes during the circadian cycle to control KaiC phosphorylation. Complexes KaiC(6), KaiA(2-4):KaiC(6), KaiB(6):KaiC(6) and KaiC(6):KaiB(6):KaiA(12) are among the most important forms, many form cooperatively. Undergoes a major conformational rearrangment; in the free state forms homotetramers as a dimer of dimers. When bound to the CI domain of KaiC switches to a monomeric thioredoxin-fold (KaiB(fs)). KaiB(fs) binds CikA, leading it to dephosphorylate phospho-RpaA.

Key component of the KaiABC oscillator complex, which constitutes the main circadian regulator in cyanobacteria. Complex composition changes during the circadian cycle to control KaiC phosphorylation. KaiA stimulates KaiC autophosphorylation, while KaiB sequesters KaiA, leading to KaiC autodephosphorylation. Phospho-Ser-431 KaiC accumulation triggers binding of KaiB to form the KaiB(6):KaiC(6) complex, leading to changes in output regulators CikA and SasA. KaiB switches to a thioredoxin-like fold (KaiB(fs)) when bound to KaiC. KaiB(6):KaiC(6) formation exposes a site for KaiA binding that sequesters KaiA from KaiC, making the KaiC(6):KaiB(6):KaiA(12) complex that results in KaiC autodephosphorylation. In terms of biological role, a metamorphic protein which reversibly switches between an inactive tetrameric fold and a rare, thioredoxin-like monomeric fold (KaiB(fs)). KaiB(fs) binds phospho-KaiC, KaiA and CikA. KaiA and CikA compete for binding to KaiB(fs), and KaiB(fs) and SasA compete for binding to KaiC, thus the clock oscillator and output signal pathway are tightly coupled. In Synechococcus sp. (strain RCC307), this protein is Circadian clock oscillator protein KaiB.